The following is a 722-amino-acid chain: Polyribonucleotide nucleotidyltransferase (722 aa).

Residues Asp487 and Asp493 each coordinate Mg(2+). A KH domain is found at 554–613 (PRIETFKIPTDKIREVIGTGGKVIREIVEKTGAKVNIEDDGTVKVASSDGESIKAAIKWI). The region spanning 623 to 691 (GEIYEGTVVK…DRGKTRLSMK (69 aa)) is the S1 motif domain. The interval 697–722 (TGEDLEAKQKAEAKAEGEAPAQAAGE) is disordered. Residues 701–713 (LEAKQKAEAKAEG) are compositionally biased toward basic and acidic residues.

It belongs to the polyribonucleotide nucleotidyltransferase family. Mg(2+) serves as cofactor.

The protein localises to the cytoplasm. It catalyses the reaction RNA(n+1) + phosphate = RNA(n) + a ribonucleoside 5'-diphosphate. In terms of biological role, involved in mRNA degradation. Catalyzes the phosphorolysis of single-stranded polyribonucleotides processively in the 3'- to 5'-direction. This is Polyribonucleotide nucleotidyltransferase from Rhodopseudomonas palustris (strain TIE-1).